The following is a 364-amino-acid chain: Heavy metal-associated isoprenylated plant protein 35 (364 aa).

Positions 1 to 12 (MATDEMKSETKK) are enriched in basic and acidic residues. The tract at residues 1–33 (MATDEMKSETKKTEHKQKQSTQIKQDLPPPTIP) is disordered. One can recognise an HMA domain in the interval 39–102 (YKSCTLKVSI…KLNKAGKNAE (64 aa)). Residues cysteine 50 and cysteine 53 each contribute to the a metal cation site. The tract at residues 101-265 (AEQLPEIPDP…PPTATDYDRP (165 aa)) is disordered. Positions 111–122 (VDNKPKPVDPKE) are enriched in basic and acidic residues. Over residues 134–144 (QITNEATSSGI) the composition is skewed to polar residues. Composition is skewed to basic and acidic residues over residues 154–169 (ECDKPESEKPVDEKCL) and 180–198 (VKEEKKDVLKEKDSGKEES). Residues 237-253 (SLATTNNPTDGPARTQS) are compositionally biased toward polar residues. Cysteine methyl ester is present on cysteine 361. Cysteine 361 carries the S-farnesyl cysteine lipid modification. The propeptide at 362 to 364 (AIM) is removed in mature form.

The protein belongs to the HIPP family.

Its function is as follows. Heavy-metal-binding protein. The polypeptide is Heavy metal-associated isoprenylated plant protein 35 (Arabidopsis thaliana (Mouse-ear cress)).